A 209-amino-acid chain; its full sequence is Protein-L-isoaspartate O-methyltransferase (209 aa).

The active site involves Ser-55.

The protein belongs to the methyltransferase superfamily. L-isoaspartyl/D-aspartyl protein methyltransferase family.

Its subcellular location is the cytoplasm. It catalyses the reaction [protein]-L-isoaspartate + S-adenosyl-L-methionine = [protein]-L-isoaspartate alpha-methyl ester + S-adenosyl-L-homocysteine. Its function is as follows. Catalyzes the methyl esterification of L-isoaspartyl residues in peptides and proteins that result from spontaneous decomposition of normal L-aspartyl and L-asparaginyl residues. It plays a role in the repair and/or degradation of damaged proteins. The protein is Protein-L-isoaspartate O-methyltransferase of Anaeromyxobacter dehalogenans (strain 2CP-C).